Here is a 335-residue protein sequence, read N- to C-terminus: MDRIVEIEKYSFDETYETSLRPSNFDGYIGQESIKKNLNIFIAAAKKRNECLDHILFSGPAGLGKTTLANIISYEMGANIKTTAAPMIEKSGDLAAILTNLSEGDILFIDEIHRLSPAIEEVLYPAMEDYRLDIIIGSGPAAQTIKIDLPKFTLIGATTRAGMLSNPLRDRFGMQFRLEFYKDSELALILQKAALKLNKTCEEKAALEIAKRSRSTPRIALRLLKRVRDFADVNDEEIITEKRANEALNSLGVNELGFDAMDLRYLELLTAAKQKPIGLASIAAALSEDENTIEDVIEPYLLANGYIERTAKGRIASAKSYSALKLNYEKTLFEE.

The segment at 1-181 is large ATPase domain (RuvB-L); that stretch reads MDRIVEIEKY…FGMQFRLEFY (181 aa). Residues Leu20, Arg21, Gly62, Lys65, Thr66, Thr67, 128–130, Arg171, Tyr181, and Arg218 each bind ATP; that span reads EDY. Thr66 is a binding site for Mg(2+). A small ATPAse domain (RuvB-S) region spans residues 182–252; the sequence is KDSELALILQ…RANEALNSLG (71 aa). Positions 255 to 335 are head domain (RuvB-H); sequence ELGFDAMDLR…LNYEKTLFEE (81 aa). DNA is bound by residues Arg309 and Arg314.

The protein belongs to the RuvB family. As to quaternary structure, homohexamer. Forms an RuvA(8)-RuvB(12)-Holliday junction (HJ) complex. HJ DNA is sandwiched between 2 RuvA tetramers; dsDNA enters through RuvA and exits via RuvB. An RuvB hexamer assembles on each DNA strand where it exits the tetramer. Each RuvB hexamer is contacted by two RuvA subunits (via domain III) on 2 adjacent RuvB subunits; this complex drives branch migration. In the full resolvosome a probable DNA-RuvA(4)-RuvB(12)-RuvC(2) complex forms which resolves the HJ.

It is found in the cytoplasm. It catalyses the reaction ATP + H2O = ADP + phosphate + H(+). Functionally, the RuvA-RuvB-RuvC complex processes Holliday junction (HJ) DNA during genetic recombination and DNA repair, while the RuvA-RuvB complex plays an important role in the rescue of blocked DNA replication forks via replication fork reversal (RFR). RuvA specifically binds to HJ cruciform DNA, conferring on it an open structure. The RuvB hexamer acts as an ATP-dependent pump, pulling dsDNA into and through the RuvAB complex. RuvB forms 2 homohexamers on either side of HJ DNA bound by 1 or 2 RuvA tetramers; 4 subunits per hexamer contact DNA at a time. Coordinated motions by a converter formed by DNA-disengaged RuvB subunits stimulates ATP hydrolysis and nucleotide exchange. Immobilization of the converter enables RuvB to convert the ATP-contained energy into a lever motion, pulling 2 nucleotides of DNA out of the RuvA tetramer per ATP hydrolyzed, thus driving DNA branch migration. The RuvB motors rotate together with the DNA substrate, which together with the progressing nucleotide cycle form the mechanistic basis for DNA recombination by continuous HJ branch migration. Branch migration allows RuvC to scan DNA until it finds its consensus sequence, where it cleaves and resolves cruciform DNA. The polypeptide is Holliday junction branch migration complex subunit RuvB (Campylobacter jejuni (strain RM1221)).